Consider the following 84-residue polypeptide: Transcriptional regulator WhiB1 (84 aa).

In terms of domain architecture, 4Fe-4S Wbl-type spans valine 8 to alanine 70. 4 residues coordinate [4Fe-4S] cluster: cysteine 9, cysteine 37, cysteine 40, and cysteine 46.

The protein belongs to the WhiB family. In terms of assembly, homodimer. [4Fe-4S] cluster serves as cofactor. The Fe-S cluster can be nitrosylated by nitric oxide (NO). In terms of processing, upon Fe-S cluster removal intramolecular disulfide bonds are formed.

Its subcellular location is the cytoplasm. Its function is as follows. Acts as a transcriptional regulator. Probably redox-responsive. The apo- but not holo-form probably binds DNA. The polypeptide is Transcriptional regulator WhiB1 (whiB1) (Mycobacterium tuberculosis (strain CDC 1551 / Oshkosh)).